A 97-amino-acid polypeptide reads, in one-letter code: Aspartyl/glutamyl-tRNA(Asn/Gln) amidotransferase subunit C (97 aa).

This sequence belongs to the GatC family. In terms of assembly, heterotrimer of A, B and C subunits.

It catalyses the reaction L-glutamyl-tRNA(Gln) + L-glutamine + ATP + H2O = L-glutaminyl-tRNA(Gln) + L-glutamate + ADP + phosphate + H(+). The catalysed reaction is L-aspartyl-tRNA(Asn) + L-glutamine + ATP + H2O = L-asparaginyl-tRNA(Asn) + L-glutamate + ADP + phosphate + 2 H(+). In terms of biological role, allows the formation of correctly charged Asn-tRNA(Asn) or Gln-tRNA(Gln) through the transamidation of misacylated Asp-tRNA(Asn) or Glu-tRNA(Gln) in organisms which lack either or both of asparaginyl-tRNA or glutaminyl-tRNA synthetases. The reaction takes place in the presence of glutamine and ATP through an activated phospho-Asp-tRNA(Asn) or phospho-Glu-tRNA(Gln). This Cyanothece sp. (strain PCC 7425 / ATCC 29141) protein is Aspartyl/glutamyl-tRNA(Asn/Gln) amidotransferase subunit C.